Reading from the N-terminus, the 294-residue chain is 1,4-dihydroxy-2-naphthoate octaprenyltransferase (294 aa).

6 helical membrane-spanning segments follow: residues 35–55 (SAVWWKALLALVVAVALVIGV), 103–123 (AGLALALLSAPWLIMVGATCI), 140–160 (GFGEVAVFVFFGLVAVLGTEY), 166–186 (VDWVGLVLAVSTGALSSSVLV), 220–240 (LLVATGVLTVVLMVATSWCAV), and 272–292 (GLAMVVWAIAVAGALTLAGSV).

It belongs to the MenA family. Type 1 subfamily.

It is found in the cell membrane. It catalyses the reaction an all-trans-polyprenyl diphosphate + 1,4-dihydroxy-2-naphthoate + H(+) = a 2-demethylmenaquinol + CO2 + diphosphate. Its pathway is quinol/quinone metabolism; menaquinone biosynthesis; menaquinol from 1,4-dihydroxy-2-naphthoate: step 1/2. Conversion of 1,4-dihydroxy-2-naphthoate (DHNA) to demethylmenaquinone (DMK). The sequence is that of 1,4-dihydroxy-2-naphthoate octaprenyltransferase from Mycobacterium leprae (strain TN).